We begin with the raw amino-acid sequence, 438 residues long: Fibrinogen gamma chain (438 aa).

An N-terminal signal peptide occupies residues 1–25 (MTRLPKQGLLLLQSLALLSSAFGNI). N76 carries an N-linked (GlcNAc...) asparagine glycan. In terms of domain architecture, Fibrinogen C-terminal spans 167–414 (QIQEFTGKDC…SVTMKIMPLN (248 aa)). Cysteines 176 and 205 form a disulfide. D341, D343, and G347 together coordinate Ca(2+). Cysteines 349 and 362 form a disulfide.

Heterohexamer; disulfide linked. Contains 2 sets of 3 non-identical chains (alpha, beta and gamma). The 2 heterotrimers are in head to head conformation with the N-termini in a small central domain. In terms of processing, conversion of fibrinogen to fibrin is triggered by thrombin, which cleaves fibrinopeptides A and B from alpha and beta chains, and thus exposes the N-terminal polymerization sites responsible for the formation of the soft clot. The soft clot is converted into the hard clot by factor XIIIA which catalyzes the epsilon-(gamma-glutamyl)lysine cross-linking between gamma chains (stronger) and between alpha chains (weaker) of different monomers.

Its subcellular location is the secreted. In terms of biological role, together with fibrinogen alpha (FGA) and fibrinogen beta (FGB), polymerizes to form an insoluble fibrin matrix. Has a major function in hemostasis as one of the primary components of blood clots. The chain is Fibrinogen gamma chain (fgg) from Xenopus laevis (African clawed frog).